Consider the following 327-residue polypeptide: Glycerol-3-phosphate dehydrogenase [NAD(P)+] (327 aa).

3 residues coordinate NADPH: Trp-13, His-33, and Lys-102. Residues Lys-102, Gly-130, and Ser-132 each coordinate sn-glycerol 3-phosphate. Position 134 (Ala-134) interacts with NADPH. Lys-185, Asp-238, Ser-248, Arg-249, and Asn-250 together coordinate sn-glycerol 3-phosphate. The active-site Proton acceptor is the Lys-185. Arg-249 is an NADPH binding site. Glu-275 provides a ligand contact to NADPH.

Belongs to the NAD-dependent glycerol-3-phosphate dehydrogenase family.

It is found in the cytoplasm. The catalysed reaction is sn-glycerol 3-phosphate + NAD(+) = dihydroxyacetone phosphate + NADH + H(+). It catalyses the reaction sn-glycerol 3-phosphate + NADP(+) = dihydroxyacetone phosphate + NADPH + H(+). The protein operates within membrane lipid metabolism; glycerophospholipid metabolism. Its function is as follows. Catalyzes the reduction of the glycolytic intermediate dihydroxyacetone phosphate (DHAP) to sn-glycerol 3-phosphate (G3P), the key precursor for phospholipid synthesis. The chain is Glycerol-3-phosphate dehydrogenase [NAD(P)+] from Vesicomyosocius okutanii subsp. Calyptogena okutanii (strain HA).